The following is a 529-amino-acid chain: Type I inositol polyphosphate 5-phosphatase 5 (529 aa).

2 catalytic regions span residues 371 to 386 and 451 to 466; these read DRVL…VALT and KRRT…WKGE.

Belongs to the inositol polyphosphate 5-phosphatase family.

May be involved in the regulation of root hairs development. Required for restricting both the size of the root-hair initiation site and the width of the root hairs during the transition to tip growth, but is not required for normal subsequent tip growth. This Arabidopsis thaliana (Mouse-ear cress) protein is Type I inositol polyphosphate 5-phosphatase 5.